A 500-amino-acid chain; its full sequence is NAD(P)H-quinone oxidoreductase chain 4, chloroplastic (500 aa).

Helical transmembrane passes span 4-24 (FPWLTIIVGFPISAGSLMLFL), 35-55 (YTICICILELLITTYAFCYNF), 87-107 (IGTILLTGFITTLAALAAFPV), 113-130 (FFHFLMLAMYSGQIGSFS), 134-154 (LLLFFIMWELELIPVYLLLSM), 167-187 (FILYTAGSSIFLLIGVLGISL), 211-231 (ILFYIGFLIAFAVKSPIIPLH), 242-262 (HYSTCMLLAGILLKMGAYGLV), 272-292 (AHSMFSPWLMVVGTIQIIYAA), 305-325 (IAYSSVSHMGFIIIGIGSITD), 330-350 (GAILQIISHGFIGAALFFLAG), 386-406 (LALPGMSGFVAELIVFFGIIT), 416-436 (ILIIFVMAIGMILTPIYLLSM), and 462-482 (LFLSISILLPIIGIGIYPDFV).

Belongs to the complex I subunit 4 family.

It is found in the plastid. Its subcellular location is the chloroplast thylakoid membrane. The enzyme catalyses a plastoquinone + NADH + (n+1) H(+)(in) = a plastoquinol + NAD(+) + n H(+)(out). It carries out the reaction a plastoquinone + NADPH + (n+1) H(+)(in) = a plastoquinol + NADP(+) + n H(+)(out). This chain is NAD(P)H-quinone oxidoreductase chain 4, chloroplastic, found in Arabis hirsuta (Hairy rock-cress).